The chain runs to 368 residues: Phosphate acyltransferase (368 aa).

The tract at residues 337–368 is disordered; that stretch reads LGDGEHDAGGAGQASPAAGHHAEPSAAQSSKA.

This sequence belongs to the PlsX family. In terms of assembly, homodimer. Probably interacts with PlsY.

Its subcellular location is the cytoplasm. The enzyme catalyses a fatty acyl-[ACP] + phosphate = an acyl phosphate + holo-[ACP]. It functions in the pathway lipid metabolism; phospholipid metabolism. Catalyzes the reversible formation of acyl-phosphate (acyl-PO(4)) from acyl-[acyl-carrier-protein] (acyl-ACP). This enzyme utilizes acyl-ACP as fatty acyl donor, but not acyl-CoA. This is Phosphate acyltransferase from Burkholderia orbicola (strain MC0-3).